The primary structure comprises 594 residues: Cationic amino acid transporter 1 (594 aa).

At alanine 2 the chain carries N-acetylalanine. Residues alanine 2 to aspartate 78 lie on the Cytoplasmic side of the membrane. A helical membrane pass occupies residues leucine 79 to glutamate 99. Residues alanine 100–serine 104 lie on the Extracellular side of the membrane. N-linked (GlcNAc...) asparagine glycosylation is present at asparagine 102. Residues glycine 105 to cysteine 125 form a helical membrane-spanning segment. The Cytoplasmic segment spans residues tyrosine 126 to aspartate 149. A helical transmembrane segment spans residues phenylalanine 150–valine 170. Residues alanine 171–serine 201 lie on the Extracellular side of the membrane. The helical transmembrane segment at histidine 202–threonine 222 threads the bilayer. Residues lysine 223–arginine 227 are Cytoplasmic-facing. The chain crosses the membrane as a helical span at residues phenylalanine 228 to phenylalanine 248. Residues threonine 249 to glycine 266 are Extracellular-facing. N-linked (GlcNAc...) asparagine glycosylation occurs at asparagine 255. A helical membrane pass occupies residues valine 267 to methionine 287. Over alanine 288 to aspartate 297 the chain is Cytoplasmic. The chain crosses the membrane as a helical span at residues isoleucine 298 to valine 318. Residues threonine 319–lysine 348 are Extracellular-facing. A helical membrane pass occupies residues tyrosine 349 to glycine 369. The Cytoplasmic portion of the chain corresponds to glutamine 370 to lysine 393. The chain crosses the membrane as a helical span at residues threonine 394–phenylalanine 414. Residues threonine 415–lysine 418 lie on the Extracellular side of the membrane. A helical transmembrane segment spans residues isoleucine 419–leucine 439. Residues leucine 440 to lysine 457 are Cytoplasmic-facing. A helical transmembrane segment spans residues phenylalanine 458–leucine 478. Over glutamate 479 to tryptophan 483 the chain is Extracellular. Residues isoleucine 484 to valine 504 traverse the membrane as a helical segment. The Cytoplasmic segment spans residues proline 505–lysine 511. Residues isoleucine 512–leucine 532 form a helical membrane-spanning segment. At leucine 533–arginine 543 the chain is on the extracellular side. The chain crosses the membrane as a helical span at residues phenylalanine 544 to tyrosine 564. Residues aspartate 565 to threonine 594 are Cytoplasmic-facing.

It belongs to the amino acid-polyamine-organocation (APC) superfamily. Cationic amino acid transporter (CAT) (TC 2.A.3.3) family. Expressed in roots, stems, flowers, petioles, seeds, siliques, and leaves. Mostly present in major veins.

The protein localises to the membrane. With respect to regulation, inhibited by the protonophore 2,4-dinitrophenol. Its function is as follows. High-affinity permease involved in the transport of the cationic amino acids (e.g. arginine, lysine, histidine, citrulline, valine, and glutamate). Transport mostly basic amino acids, and, to a lower extent neutral and acidic amino acids. May function as a proton symporter. This Arabidopsis thaliana (Mouse-ear cress) protein is Cationic amino acid transporter 1 (CAT1).